The following is a 295-amino-acid chain: Pyridoxal 5'-phosphate synthase subunit PdxS (295 aa).

D25 is a D-ribose 5-phosphate binding site. The active-site Schiff-base intermediate with D-ribose 5-phosphate is the K82. G154 is a D-ribose 5-phosphate binding site. A D-glyceraldehyde 3-phosphate-binding site is contributed by R166. D-ribose 5-phosphate is bound by residues G215 and 236–237; that span reads GS.

The protein belongs to the PdxS/SNZ family. In terms of assembly, in the presence of PdxT, forms a dodecamer of heterodimers.

It catalyses the reaction aldehydo-D-ribose 5-phosphate + D-glyceraldehyde 3-phosphate + L-glutamine = pyridoxal 5'-phosphate + L-glutamate + phosphate + 3 H2O + H(+). It functions in the pathway cofactor biosynthesis; pyridoxal 5'-phosphate biosynthesis. Functionally, catalyzes the formation of pyridoxal 5'-phosphate from ribose 5-phosphate (RBP), glyceraldehyde 3-phosphate (G3P) and ammonia. The ammonia is provided by the PdxT subunit. Can also use ribulose 5-phosphate and dihydroxyacetone phosphate as substrates, resulting from enzyme-catalyzed isomerization of RBP and G3P, respectively. The polypeptide is Pyridoxal 5'-phosphate synthase subunit PdxS (Bacillus anthracis (strain A0248)).